We begin with the raw amino-acid sequence, 255 residues long: Wtf element wtf15 (255 aa).

Residues 19–78 (KAGHEIDLEGSPPSEHNSEEKSTLPSNSDILTSANPVSQASETPDHSIESNTGSTQSPTS) are disordered. Composition is skewed to polar residues over residues 41–60 (TLPSNSDILTSANPVSQASE) and 67–78 (ESNTGSTQSPTS). Transmembrane regions (helical) follow at residues 85 to 105 (FSFCIVYYFYFAIVVLGCVLP), 112 to 132 (FLIAFLVIFGIISVILFSGSI), and 162 to 182 (FLKTFVFYGLLKTIEHFLVLL).

It belongs to the WTF family.

The protein resides in the spore membrane. May act in meiotic drive. The chain is Wtf element wtf15 from Schizosaccharomyces kambucha (Fission yeast).